A 244-amino-acid chain; its full sequence is Lytic polysaccharide monooxygenase-like protein ANIA_04702 (244 aa).

The first 23 residues, 1–23 (MLMSTSPSPWLAAAMLCIGLANA), serve as a signal peptide directing secretion. His-24 provides a ligand contact to Cu(2+). His-24 bears the Methylhistidine mark. N-linked (GlcNAc...) asparagine glycans are attached at residues Asn-57, Asn-80, Asn-118, Asn-159, Asn-192, and Asn-198. 2 disulfides stabilise this stretch: Cys-72-Cys-177 and Cys-142-Cys-196. Residue Asn-215 is the site of GPI-anchor amidated asparagine attachment. A propeptide spans 216–244 (AGLEAVTVPSFLTAVVPTFLGIAYGLLMA) (removed in mature form).

Belongs to the X325 family. Cu(2+) is required as a cofactor. Post-translationally, the catalytically essential N-terminal histidine His-24 is post-translationally modified by methylation to prevent protonation of the histidine side chain, and protect the critical active site of the enzyme from oxidative damage.

The protein localises to the cell membrane. Functionally, lytic polysaccharide monooxygenase-like protein that has diverged to biological functions other than polysaccharide degradation since it does not perform oxidative cleavage of polysaccharides. Acts as a cell surface-bound protein that functions in the copper-accumulation pathway. May also act as the major cell wall sensor that regulates MAP kinase-dependent hyphal anastomosis, the fusion of hyphal cells. The sequence is that of Lytic polysaccharide monooxygenase-like protein ANIA_04702 from Emericella nidulans (strain FGSC A4 / ATCC 38163 / CBS 112.46 / NRRL 194 / M139) (Aspergillus nidulans).